A 211-amino-acid chain; its full sequence is MTLAAGPAEAGDVLASRARELVAIGARMDARGWVPASAGNLSARCTADSIAITRSGVHKGRLEAADIIEVWLDGTPLRAGDRPSAETQLHCQVYERLPAAGAVLHGHSVAATALTLADNSPGIVLEGYEILKAFPGIATHETRIVLPVFDNDQDMRRLAAAIAPAFAAPPIGYVLRGHGIYAWGEDVERCFWRLEALEFLLSCECERRRMR.

The Zn(2+) site is built by H105 and H107.

It belongs to the aldolase class II family. MtnB subfamily. Zn(2+) serves as cofactor.

The catalysed reaction is 5-(methylsulfanyl)-D-ribulose 1-phosphate = 5-methylsulfanyl-2,3-dioxopentyl phosphate + H2O. Its pathway is amino-acid biosynthesis; L-methionine biosynthesis via salvage pathway; L-methionine from S-methyl-5-thio-alpha-D-ribose 1-phosphate: step 2/6. Its function is as follows. Catalyzes the dehydration of methylthioribulose-1-phosphate (MTRu-1-P) into 2,3-diketo-5-methylthiopentyl-1-phosphate (DK-MTP-1-P). This is Methylthioribulose-1-phosphate dehydratase from Acidiphilium cryptum (strain JF-5).